Reading from the N-terminus, the 691-residue chain is Cyclic nucleotide-gated channel alpha-1 (691 aa).

Over 1-168 (MKKNIINTWY…PAGNMYYNWL (168 aa)) the chain is Cytoplasmic. The disordered stretch occupies residues 31–151 (ENGARSSFSD…KGKDKKEEEK (121 aa)). Positions 39 to 56 (SDDDGDDDSASMFEESEN) are enriched in acidic residues. 2 stretches are compositionally biased toward basic and acidic residues: residues 57-76 (ETPHARDSCRNNSQRRDPSQ) and 112-151 (SKSGDKNENKKDSEKKKKKEKEKEKKNKEEKGKDKKEEEK). A helical membrane pass occupies residues 169–190 (FCITLPVMYNWTMVIARACFDE). Topologically, residues 191-200 (LQSDYLEYWI) are extracellular. Residues 201-221 (IFDYLSDIVYLLDMFVRTRTG) form a helical membrane-spanning segment. Over 222 to 246 (YLEQGLLVREEAKLIEKYKSNLQFK) the chain is Cytoplasmic. A helical membrane pass occupies residues 247 to 265 (LDFLSVIPTDLLYFKLGWN). Topologically, residues 266–270 (YPEIR) are extracellular. A helical membrane pass occupies residues 271-289 (LNRLLRISRMFEFFQRTET). Topologically, residues 290–296 (RTNYPNI) are cytoplasmic. Residues 294–402 (PNIFRISNLV…GNIGSMISNM (109 aa)) form an ion conduction pathway region. The helical transmembrane segment at 297–320 (FRISNLVMYIVIIIHWNACVYFSI) threads the bilayer. The Extracellular portion of the chain corresponds to 321–343 (SKAIGFGNDTWVYPDVNDPEFGR). N328 is a glycosylation site (N-linked (GlcNAc...) asparagine). The next 2 helical transmembrane spans lie at 344–378 (LARKYVYSLYWSTLTLTTIGETPPPVRDSEYVFVV) and 379–403 (VDFLIGVLIFATIVGNIGSMISNMN). The segment at 361–364 (TIGE) is selectivity filter. The C-linker stretch occupies residues 404–480 (AARAEFQARI…DTLKKVRIFA (77 aa)). Over 404–691 (AARAEFQARI…ESRPLDSTQD (288 aa)) the chain is Cytoplasmic. The cyclic nucleotide-binding domain stretch occupies residues 484 to 604 (AGLLVELVLK…EEKGKQILMK (121 aa)). Residues G544, S547, R560, and T561 each coordinate 3',5'-cyclic GMP. 3',5'-cyclic AMP-binding residues include R560 and T561. The stretch at 622–676 (LEEKVTRMEGSVDLLQTRFARILAEYESMQQKLKQRLTKVERFLKPIIDTEFSAL) forms a coiled coil.

This sequence belongs to the cyclic nucleotide-gated cation channel (TC 1.A.1.5) family. CNGA1 subfamily. Forms heterotetrameric channels composed of CNGA1 and CNGB1 subunits with 3:1 stoichiometry. May also form cyclic nucleotide-activated homotetrameric channels, that are efficiently activated by saturating cGMP, but poorly activated by saturating cAMP compared to the heterotetramer with CNGB1. The channel binds Ca(2+)-bound CALM1 via CaM1 and CaM2 regions of the CNGB1 subunit; this interaction modulates the affinity of the channel for cNMPs in response to intracellular Ca(2+) levels.

It localises to the cell membrane. The enzyme catalyses Ca(2+)(in) = Ca(2+)(out). It catalyses the reaction Na(+)(in) = Na(+)(out). It carries out the reaction K(+)(in) = K(+)(out). The catalysed reaction is NH4(+)(in) = NH4(+)(out). The enzyme catalyses Rb(+)(in) = Rb(+)(out). It catalyses the reaction Li(+)(in) = Li(+)(out). It carries out the reaction Cs(+)(in) = Cs(+)(out). Functionally, pore-forming subunit of the rod cyclic nucleotide-gated channel. Mediates rod photoresponses at dim light converting transient changes in intracellular cGMP levels into electrical signals. In the dark, cGMP levels are high and keep the channel open enabling a steady inward current carried by Na(+) and Ca(2+) ions that leads to membrane depolarization and neurotransmitter release from synaptic terminals. Upon photon absorption cGMP levels decline leading to channel closure and membrane hyperpolarization that ultimately slows neurotransmitter release and signals the presence of light, the end point of the phototransduction cascade. Conducts cGMP- and cAMP-gated ion currents, with permeability for monovalent and divalent cations. The selectivity for Ca(2+) over Na(+) increases with cGMP concentrations, whereas the selectivity among monovalent ions is independent of the cGMP levels. This chain is Cyclic nucleotide-gated channel alpha-1, found in Canis lupus familiaris (Dog).